An 89-amino-acid chain; its full sequence is Small ribosomal subunit protein bS18 (89 aa).

Belongs to the bacterial ribosomal protein bS18 family. In terms of assembly, part of the 30S ribosomal subunit. Forms a tight heterodimer with protein bS6.

Functionally, binds as a heterodimer with protein bS6 to the central domain of the 16S rRNA, where it helps stabilize the platform of the 30S subunit. The protein is Small ribosomal subunit protein bS18 of Bdellovibrio bacteriovorus (strain ATCC 15356 / DSM 50701 / NCIMB 9529 / HD100).